A 2142-amino-acid polypeptide reads, in one-letter code: U5 small nuclear ribonucleoprotein 200 kDa helicase (2142 aa).

Disordered stretches follow at residues 52-74 (MGDR…RQKR), 211-234 (EESE…QDEG), and 366-396 (RQLD…DGGA). The span at 369-391 (DTGKSEDQEEGEARGSKRGKGDA) shows a compositional bias: basic and acidic residues. One can recognise a Helicase ATP-binding 1 domain in the interval 490–673 (KAALDSDENM…FLRVKPDKGL (184 aa)). 503–510 (APTGAGKT) provides a ligand contact to ATP. The DEIH box signature appears at 615 to 618 (DEIH). In terms of domain architecture, Helicase C-terminal 1 spans 684-917 (SLEQQYIGVT…GTVQHLQDAV (234 aa)). An SEC63 1 domain is found at 981–1286 (VTDLGRIASH…GAETQLPVSF (306 aa)). Positions 1337–1511 (NAVYNSDENV…WLGCNPNATF (175 aa)) constitute a Helicase ATP-binding 2 domain. An ATP-binding site is contributed by 1350–1357 (APTGSGKM). Residues 1453–1456 (DELQ) carry the DELQ box motif. A Helicase C-terminal 2 domain is found at 1544-1752 (PVYNAILKYS…TIENKQDAVD (209 aa)). The region spanning 1811 to 2128 (PLNLGMIAAY…GCDQEYKFSI (318 aa)) is the SEC63 2 domain.

It belongs to the helicase family. SKI2 subfamily.

It is found in the nucleus. The catalysed reaction is ATP + H2O = ADP + phosphate + H(+). Its function is as follows. Catalyzes the ATP-dependent unwinding of U4/U6 RNA duplices, an essential step in the assembly of a catalytically active spliceosome. Plays a role in pre-mRNA splicing. This is U5 small nuclear ribonucleoprotein 200 kDa helicase from Drosophila melanogaster (Fruit fly).